The primary structure comprises 779 residues: GATOR2 complex protein WDR24 (779 aa).

6 WD repeats span residues 66-106, 112-152, 155-195, 199-239, 243-285, and 289-332; these read SLNF…RNKQ, EHKR…SVST, GQSE…RYER, AHTG…VKEI, QTFA…IPFA, and EHKD…VDRA. Disordered regions lie at residues 506–526 and 570–590; these read LETNLNNNDENEETEGSEGQA and DHPSAPEPLQEKQESPHVSGS. A C4-type zinc finger spans residues 707 to 729; that stretch reads NCSNCKRPMSNKGWICDRCHQCA. Zn(2+)-binding residues include cysteine 708, cysteine 711, cysteine 722, cysteine 725, cysteine 732, cysteine 735, cysteine 746, cysteine 749, histidine 751, histidine 754, histidine 757, cysteine 768, cysteine 772, histidine 774, and cysteine 776. The RING-type; atypical zinc-finger motif lies at 730-779; the sequence is SVCAVCHHVVKGLFVWCQGCSHGGHLEHVMEWLKQSKHCPAGCGHLCEYT.

It belongs to the WD repeat WDR24 family. In terms of assembly, component of the GATOR2 subcomplex, composed of MIOS, SEC13, SEH1L, WDR24 and WDR59. The GATOR2 complex interacts with CASTOR1 and CASTOR2; the interaction is negatively regulated by arginine. The GATOR2 complex interacts with SESN1, SESN2 and SESN3; the interaction is negatively regulated by amino acids.

The protein localises to the lysosome membrane. It catalyses the reaction S-ubiquitinyl-[E2 ubiquitin-conjugating enzyme]-L-cysteine + [acceptor protein]-L-lysine = [E2 ubiquitin-conjugating enzyme]-L-cysteine + N(6)-ubiquitinyl-[acceptor protein]-L-lysine.. The protein operates within protein modification; protein ubiquitination. Its activity is regulated as follows. The GATOR2 complex is negatively regulated by the upstream amino acid sensors CASTOR1 and SESN2, which sequester the GATOR2 complex in absence of amino acids. In the presence of abundant amino acids, GATOR2 is released from CASTOR1 and SESN2 and activated. In terms of biological role, catalytic component of the GATOR2 complex, a multiprotein complex that acts as an activator of the amino acid-sensing branch of the mTORC1 signaling pathway. The GATOR2 complex indirectly activates mTORC1 through the inhibition of the GATOR1 subcomplex. GATOR2 probably acts as an E3 ubiquitin-protein ligase toward GATOR1. In the presence of abundant amino acids, the GATOR2 complex mediates ubiquitination of the NPRL2 core component of the GATOR1 complex, leading to GATOR1 inactivation. In the absence of amino acids, GATOR2 is inhibited, activating the GATOR1 complex. In addition to its role in regulation of the mTORC1 complex, promotes the acidification of lysosomes and facilitates autophagic flux. Within the GATOR2 complex, WDR24 constitutes the catalytic subunit that mediates 'Lys-6'-linked ubiquitination of NPRL2. The polypeptide is GATOR2 complex protein WDR24 (Danio rerio (Zebrafish)).